The following is a 151-amino-acid chain: Large ribosomal subunit protein uL15 (151 aa).

A disordered region spans residues 1–58 (MELNQLKSVPKARNHKTKTLGRGHGSGLGKTSGRGQKGQKARKSGLTRPGFEGGQTPL). Positions 10–21 (PKARNHKTKTLG) are enriched in basic residues. A compositionally biased stretch (gly residues) spans 22 to 36 (RGHGSGLGKTSGRGQ).

The protein belongs to the universal ribosomal protein uL15 family. Part of the 50S ribosomal subunit.

Binds to the 23S rRNA. This Mycoplasma pneumoniae (strain ATCC 29342 / M129 / Subtype 1) (Mycoplasmoides pneumoniae) protein is Large ribosomal subunit protein uL15.